A 438-amino-acid chain; its full sequence is Keratin, type I cytoskeletal 13 (438 aa).

Residues 1 to 95 are head; the sequence is MSCRFQSSSM…SVDGGLLSGN (95 aa). Omega-N-methylarginine is present on residues Arg-27 and Arg-35. The interval 96-131 is coil; that stretch reads EKITMQNLNDRLASYLEKVRALEAANADLEVKIRDW. Residues 96–408 enclose the IF rod domain; sequence EKITMQNLND…SLLEGQDAKM (313 aa). The tract at residues 132-150 is linker 1; sequence HLKQSPTSPERDYSAYYKT. The interval 151–242 is coil 1B; that stretch reads IEELRIKILE…KNHEEEMKEF (92 aa). The linker 12 stretch occupies residues 243-265; it reads SNQAVGQVNVEMDATPGIDLTRV. Positions 266–404 are coil 2; sequence LAEMREQYEA…ATYRSLLEGQ (139 aa). The tail stretch occupies residues 405–438; sequence DAKMTGFNTGGNSTTTSNTSTSPSTSGRPDFRKY. The interval 408-438 is disordered; sequence MTGFNTGGNSTTTSNTSTSPSTSGRPDFRKY. The segment covering 409-431 has biased composition (low complexity); it reads TGFNTGGNSTTTSNTSTSPSTSG.

This sequence belongs to the intermediate filament family. In terms of assembly, heterotetramer of two type I and two type II keratins. In terms of processing, O-glycosylated; glycans consist of single N-acetylglucosamine residues.

In terms of biological role, type 1 keratin. Maintains postnatal tongue mucosal cell homeostasis and tissue organization in response to mechanical stress, potentially via regulation of the G1/S phase cyclins CCNE1 and CCNE2. The chain is Keratin, type I cytoskeletal 13 from Rattus norvegicus (Rat).